Consider the following 187-residue polypeptide: MSHLALKDLFSGFFVIDDEEEVEVPDKQQQVNEAPAKEQSQQTTKQNAIKSVPQKSASRYTTTSEERNNRMSNYSKNNSRNVVTMNNATPNNASQESSKMCLFEPRVFSDTQDIADELKNRRATLVNLQRIDKVSAKRIIDFLSGTVYAIGGDIQRVGTDIFLCTPDNVEVAGSITDHIENVEHSFD.

The tract at residues 21–97 is disordered; the sequence is EVEVPDKQQQ…ATPNNASQES (77 aa). Polar residues-rich tracts occupy residues 38–63 and 70–97; these read EQSQQTTKQNAIKSVPQKSASRYTTT and RMSNYSKNNSRNVVTMNNATPNNASQES.

This sequence belongs to the SepF family. In terms of assembly, homodimer. Interacts with FtsZ.

The protein resides in the cytoplasm. In terms of biological role, cell division protein that is part of the divisome complex and is recruited early to the Z-ring. Probably stimulates Z-ring formation, perhaps through the cross-linking of FtsZ protofilaments. Its function overlaps with FtsA. In Staphylococcus aureus (strain MRSA252), this protein is Cell division protein SepF.